A 256-amino-acid chain; its full sequence is 5-keto-4-deoxy-D-glucarate aldolase (256 aa).

His50 serves as the catalytic Proton acceptor. Gln151 contacts substrate. Glu153 lines the Mg(2+) pocket. Substrate-binding residues include Ser178 and Asp179. Residue Asp179 participates in Mg(2+) binding.

Belongs to the HpcH/HpaI aldolase family. KDGluc aldolase subfamily. Homohexamer; trimer of dimers. It depends on Mg(2+) as a cofactor.

It catalyses the reaction 5-dehydro-4-deoxy-D-glucarate = 2-hydroxy-3-oxopropanoate + pyruvate. It carries out the reaction 2-dehydro-3-deoxy-D-glucarate = 2-hydroxy-3-oxopropanoate + pyruvate. Its pathway is carbohydrate acid metabolism; galactarate degradation; D-glycerate from galactarate: step 2/3. Its function is as follows. Catalyzes the reversible retro-aldol cleavage of both 5-keto-4-deoxy-D-glucarate and 2-keto-3-deoxy-D-glucarate to pyruvate and tartronic semialdehyde. The polypeptide is 5-keto-4-deoxy-D-glucarate aldolase (Salmonella arizonae (strain ATCC BAA-731 / CDC346-86 / RSK2980)).